We begin with the raw amino-acid sequence, 272 residues long: Insertion element IS600 uncharacterized 31 kDa protein (272 aa).

One can recognise an Integrase catalytic domain in the interval 105–268; it reads APTAPNQVWV…SPAAFREKYH (164 aa).

The sequence is that of Insertion element IS600 uncharacterized 31 kDa protein from Shigella sonnei.